We begin with the raw amino-acid sequence, 294 residues long: NAD kinase (294 aa).

Residue D74 is the Proton acceptor of the active site. NAD(+)-binding positions include 74-75 (DG), 148-149 (NE), H159, R176, D178, 189-194 (TAYSLS), and Q249.

The protein belongs to the NAD kinase family. A divalent metal cation is required as a cofactor.

It localises to the cytoplasm. It carries out the reaction NAD(+) + ATP = ADP + NADP(+) + H(+). Its function is as follows. Involved in the regulation of the intracellular balance of NAD and NADP, and is a key enzyme in the biosynthesis of NADP. Catalyzes specifically the phosphorylation on 2'-hydroxyl of the adenosine moiety of NAD to yield NADP. This is NAD kinase from Vibrio cholerae serotype O1 (strain ATCC 39541 / Classical Ogawa 395 / O395).